Consider the following 598-residue polypeptide: DNA polymerase alpha subunit B (598 aa).

Polar residues predominate over residues 112-140 (SYTTPSKGSQKRAISTPETPLTKRSVSTR). A disordered region spans residues 112 to 167 (SYTTPSKGSQKRAISTPETPLTKRSVSTRSPHQLLSPSSFSPSATPSQKYNSRSNR). S126 is modified (phosphoserine). Residues T127 and T130 each carry the phosphothreonine modification. Phosphoserine occurs at positions 141, 147, 152, and 154. Residues 141–158 (SPHQLLSPSSFSPSATPS) are compositionally biased toward low complexity.

Belongs to the DNA polymerase alpha subunit B family. In terms of assembly, component of the alpha DNA polymerase complex (also known as the alpha DNA polymerase-primase complex) consisting of four subunits: the catalytic subunit POLA1, the regulatory subunit POLA2, and primase complex subunits PRIM1 and PRIM2 respectively. Within the complex, POLA1 directly interacts with PRIM2/p58. In terms of processing, phosphorylated in a cell cycle-dependent manner, in G2/M phase.

The protein localises to the nucleus. In terms of biological role, accessory subunit of the DNA polymerase alpha complex (also known as the alpha DNA polymerase-primase complex) which plays an essential role in the initiation of DNA synthesis. During the S phase of the cell cycle, the DNA polymerase alpha complex (composed of a catalytic subunit POLA1, an accessory subunit POLA2 and two primase subunits, the catalytic subunit PRIM1 and the regulatory subunit PRIM2) is recruited to DNA at the replicative forks via direct interactions with MCM10 and WDHD1. The primase subunit of the polymerase alpha complex initiates DNA synthesis by oligomerising short RNA primers on both leading and lagging strands. These primers are initially extended by the polymerase alpha catalytic subunit and subsequently transferred to polymerase delta and polymerase epsilon for processive synthesis on the lagging and leading strand, respectively. In Homo sapiens (Human), this protein is DNA polymerase alpha subunit B (POLA2).